We begin with the raw amino-acid sequence, 625 residues long: Interleukin-1 receptor-associated kinase-like 2 (625 aa).

The 82-residue stretch at 13–94 (LDDLCRNMDA…RAAQIILNWK (82 aa)) folds into the Death domain. A disordered region spans residues 111 to 181 (KPEKPLAASV…SSDSKDFSTS (71 aa)). Phosphoserine is present on Ser144. Polar residues predominate over residues 169–181 (LPTSSDSKDFSTS). A Protein kinase domain is found at 210-489 (FNQNRKISQG…LCLRRRNTSL (280 aa)). Residues 216–224 (ISQGTFADV), Lys237, and 337–340 (KSSN) each bind ATP. The segment at 510–540 (LPWSGLSEGTGSSSNTPEETDDVDNSSLDAS) is disordered. Positions 516–526 (SEGTGSSSNTP) are enriched in polar residues.

This sequence belongs to the protein kinase superfamily. TKL Ser/Thr protein kinase family. Pelle subfamily. In terms of assembly, interacts with MYD88. IL-1 stimulation leads to the formation of a signaling complex which dissociates from the IL-1 receptor following the binding of PELI1. In terms of tissue distribution, expressed in spleen, thymus, prostate, lung, liver, skeletal muscle, kidney, pancreas and peripheral blood leukocytes.

Binds to the IL-1 type I receptor following IL-1 engagement, triggering intracellular signaling cascades leading to transcriptional up-regulation and mRNA stabilization. This chain is Interleukin-1 receptor-associated kinase-like 2 (IRAK2), found in Homo sapiens (Human).